Consider the following 147-residue polypeptide: UPF0251 protein NT01CX_1491 (147 aa).

This sequence belongs to the UPF0251 family.

This Clostridium novyi (strain NT) protein is UPF0251 protein NT01CX_1491.